A 294-amino-acid polypeptide reads, in one-letter code: Thymidylate synthase (294 aa).

DUMP-binding positions include Arg31 and 156-157 (RR). The Nucleophile role is filled by Cys176. Residues 196 to 199 (RSAD), Asn207, and 237 to 239 (HIY) contribute to the dUMP site. Asp199 is a binding site for (6R)-5,10-methylene-5,6,7,8-tetrahydrofolate. A (6R)-5,10-methylene-5,6,7,8-tetrahydrofolate-binding site is contributed by Ala293.

Belongs to the thymidylate synthase family. In terms of assembly, homodimer.

It carries out the reaction dUMP + (6R)-5,10-methylene-5,6,7,8-tetrahydrofolate = 7,8-dihydrofolate + dTMP. It functions in the pathway pyrimidine metabolism; dTTP biosynthesis. The polypeptide is Thymidylate synthase (70) (Saimiri sciureus (Common squirrel monkey)).